Reading from the N-terminus, the 570-residue chain is Multidrug and toxin extrusion protein 1 (570 aa).

M1 carries the post-translational modification N-acetylmethionine. At 1 to 37 (MEAPEEPAPVRGGPEATLEVRGSRCLRLSAFREELRA) the chain is on the cytoplasmic side. A helical transmembrane segment spans residues 38 to 58 (LLVLAGPAFLVQLMVFLISFI). Residues 59–72 (SSVFCGHLGKLELD) lie on the Extracellular side of the membrane. A helical transmembrane segment spans residues 73–93 (AVTLAIAVINVTGVSVGFGLS). At 94-123 (SACDTLISQTYGSQNLKHVGVILQRSALVL) the chain is on the cytoplasmic side. A helical membrane pass occupies residues 124–144 (LLCCFPCWALFLNTQHILLLF). The Extracellular segment spans residues 145–152 (RQDPDVSR). The chain crosses the membrane as a helical span at residues 153–173 (LTQTYVTIFIPALPATFLYML). The Cytoplasmic portion of the chain corresponds to 174 to 176 (QVK). The helical transmembrane segment at 177-197 (YLLNQGIVLPQIVTGVAANLV) threads the bilayer. At 198 to 216 (NALANYLFLHQLHLGVIGS) the chain is on the extracellular side. Residues 217-237 (ALANLISQYTLALLLFLYILG) form a helical membrane-spanning segment. Residues 238-256 (KKLHQATWGGWSLECLQDW) are Cytoplasmic-facing. A helical membrane pass occupies residues 257–276 (ASFLRLAIPSMLMLCMEWWA). Over 277 to 295 (YEVGSFLSGILGMVELGAQ) the chain is Extracellular. A helical membrane pass occupies residues 296-316 (SIVYELAIIVYMVPAGFSVAA). The Cytoplasmic portion of the chain corresponds to 317-336 (SVRVGNALGAGDMEQARKSS). Residues 337–357 (TVSLLITVLFAVAFSVLLLSC) traverse the membrane as a helical segment. The Extracellular portion of the chain corresponds to 358–370 (KDHVGYIFTTDRD). Residues 371–391 (IINLVAQVVPIYAVSHLFEAL) traverse the membrane as a helical segment. Topologically, residues 392–408 (ACTSGGVLRGSGNQKVG) are cytoplasmic. Residues 409 to 429 (AIVNTIGYYVVGLPIGIALMF) traverse the membrane as a helical segment. Over 430 to 437 (ATTLGVMG) the chain is Extracellular. The helical transmembrane segment at 438–458 (LWSGIIICTVFQAVCFLGFII) threads the bilayer. Topologically, residues 459–546 (QLNWKKACQQ…LSRKQLVLRR (88 aa)) are cytoplasmic. The disordered stretch occupies residues 508-534 (DVGKTGEPQSDQQMRQEEPLPEHPQDG). The span at 521 to 533 (MRQEEPLPEHPQD) shows a compositional bias: basic and acidic residues. The helical transmembrane segment at 547–567 (GLLLLGVFLILLVGILVRFYV) threads the bilayer. Residues 568 to 570 (RIQ) are Extracellular-facing.

The protein belongs to the multi antimicrobial extrusion (MATE) (TC 2.A.66.1) family. In terms of tissue distribution, widely expressed. The highest expression is found in adrenal gland, and to a lower extent in liver, skeletal muscle and kidney. In testis, primarily localized throughout the adluminal compartment of the seminiferous tubules with expression at the peritubular myoid cells and Leydig cells.

It localises to the cell membrane. It is found in the apical cell membrane. It carries out the reaction thiamine(out) + H(+)(in) = thiamine(in) + H(+)(out). It catalyses the reaction estrone 3-sulfate(in) + H(+)(out) = estrone 3-sulfate(out) + H(+)(in). The enzyme catalyses creatinine(in) + H(+)(out) = creatinine(out) + H(+)(in). The catalysed reaction is agmatine(in) + H(+)(out) = agmatine(out) + H(+)(in). Multidrug efflux pump that functions as a H(+)/organic cation antiporter. Plays a physiological role in the excretion of cationic compounds including endogenous metabolites, drugs, toxins through the kidney and liver, into urine and bile respectively. Mediates the efflux of endogenous compounds such as creatinine, vitamin B1/thiamine, agmatine and estrone-3-sulfate. May also contribute to regulate the transport of cationic compounds in testis across the blood-testis-barrier. This chain is Multidrug and toxin extrusion protein 1, found in Homo sapiens (Human).